Reading from the N-terminus, the 280-residue chain is Large ribosomal subunit protein uL2 (280 aa).

Disordered regions lie at residues 1 to 58 (MAIR…GGGH) and 226 to 280 (MNPV…KHGR). Composition is skewed to basic residues over residues 37 to 58 (LHGH…GGGH) and 268 to 280 (IVRR…KHGR).

Belongs to the universal ribosomal protein uL2 family. Part of the 50S ribosomal subunit. Forms a bridge to the 30S subunit in the 70S ribosome.

In terms of biological role, one of the primary rRNA binding proteins. Required for association of the 30S and 50S subunits to form the 70S ribosome, for tRNA binding and peptide bond formation. It has been suggested to have peptidyltransferase activity; this is somewhat controversial. Makes several contacts with the 16S rRNA in the 70S ribosome. The chain is Large ribosomal subunit protein uL2 from Mycolicibacterium paratuberculosis (strain ATCC BAA-968 / K-10) (Mycobacterium paratuberculosis).